A 494-amino-acid chain; its full sequence is Poly(3-hydroxybutyrate) depolymerase (494 aa).

The signal sequence occupies residues 1-25 (MAFNFIRAAAAGAAMALCGVGSVHA). The active-site Nucleophile is the Ser-45. Active-site charge relay system residues include Asp-132 and His-166. Positions 347-431 (APTGVSTSGA…AAASGTTLAA (85 aa)) constitute a Fibronectin type-III domain.

This sequence belongs to the AB hydrolase superfamily. Lipase family.

It localises to the secreted. It carries out the reaction [(3R)-hydroxybutanoate](n) + H2O = [(3R)-hydroxybutanoate](n-2) + (3R)-hydroxybutanoate dimer + H(+). The catalysed reaction is [(3R)-hydroxybutanoate](n) + H2O = [(3R)-hydroxybutanoate](n-1) + (R)-3-hydroxybutanoate + H(+). It catalyses the reaction (3R)-hydroxybutanoate dimer + H2O = 2 (R)-3-hydroxybutanoate + H(+). In terms of biological role, catalyzes the hydrolysis of poly(3-hydroxybutyrate) (PHB) film, producing the monomer and dimer of 3-hydroxybutyrate (3HB), while the 3HB trimer and tetramer are not formed. The chain is Poly(3-hydroxybutyrate) depolymerase from Delftia acidovorans (Pseudomonas acidovorans).